A 452-amino-acid chain; its full sequence is Selenide, water dikinase 2 (452 aa).

A2 bears the N-acetylalanine mark. Position 49 is a phosphoserine (S49). The active site involves U63. A non-standard amino acid (selenocysteine) is located at residue U63. Residue K66 coordinates ATP. Residues 86-111 form a disordered region; the sequence is PPLTSGLVGGQEETVQEGGLSTRPGP. Over residues 95–105 the composition is skewed to low complexity; sequence GQEETVQEGGL. ATP is bound by residues 121–123, D141, D164, and 215–218; these read GMD and GGQT. D123 contacts Mg(2+). A Mg(2+)-binding site is contributed by D164. D319 serves as a coordination point for Mg(2+).

Belongs to the selenophosphate synthase 1 family. Class I subfamily. As to quaternary structure, homodimer. It depends on Mg(2+) as a cofactor. Post-translationally, truncated SEPHS2 proteins produced by failed UGA/Sec decoding are ubiquitinated by the CRL2(KLHDC3) complex, which recognizes the glycine (Gly) at the C-terminus of truncated SEPHS2 proteins.

It carries out the reaction hydrogenselenide + ATP + H2O = selenophosphate + AMP + phosphate + 2 H(+). In terms of biological role, synthesizes selenophosphate from selenide and ATP. The protein is Selenide, water dikinase 2 (Sephs2) of Mus musculus (Mouse).